A 111-amino-acid chain; its full sequence is Exocrine gland-secreted peptide 22 (111 aa).

Positions 1–24 (MNSVPVMLFSISILLAAMLTEGRG) are cleaved as a signal peptide.

Belongs to the exocrine gland-secreted peptide family. As to expression, expressed in acinar cells of the lacrimal gland from where it is secreted into tears. Not detected in a range of other tissues tested including other exocrine glands, internal organs and sensory epithelia.

It is found in the secreted. Pheromone produced by juveniles which activates a small number of vomeronasal organ sensory neurons and exhibits a powerful inhibitory effect on adult male mating behavior. This is Exocrine gland-secreted peptide 22 from Mus musculus (Mouse).